We begin with the raw amino-acid sequence, 175 residues long: Small ribosomal subunit protein uS5 (175 aa).

The S5 DRBM domain maps to 19–82 (WQERVIQIRR…ADGKKHLIDI (64 aa)).

This sequence belongs to the universal ribosomal protein uS5 family. Part of the 30S ribosomal subunit. Contacts proteins S4 and S8.

Its function is as follows. With S4 and S12 plays an important role in translational accuracy. Located at the back of the 30S subunit body where it stabilizes the conformation of the head with respect to the body. The polypeptide is Small ribosomal subunit protein uS5 (Nostoc punctiforme (strain ATCC 29133 / PCC 73102)).